A 1365-amino-acid chain; its full sequence is Histone-lysine N-methyltransferase NSD2 (1365 aa).

Phosphothreonine is present on residues T110 and T114. S121 bears the Phosphoserine mark. Positions 149–170 are disordered; that stretch reads ADVSQSEENGQKPENKARRNRK. S172 carries the phosphoserine modification. The PWWP 1 domain maps to 222–286; sequence VGDLVWSKVS…FEKSLVAFEG (65 aa). S376 bears the Phosphoserine mark. 2 disordered regions span residues 376-455 and 516-658; these read SSGV…RKGD and EDSG…SKKS. T422 carries the post-translational modification Phosphothreonine. The segment at residues 453-521 is a DNA-binding region (HMG box); the sequence is KGDAASQFLV…VQAEEDSGNV (69 aa). The residue at position 544 (T544) is a Phosphothreonine. The segment covering 552-567 has biased composition (basic and acidic residues); it reads DKHSLRKRDTITDKTA. Residues 580–590 are compositionally biased toward polar residues; it reads SLKSQAATKNL. A compositionally biased stretch (low complexity) spans 606–622; it reads AASSALGFSKSSSPSAS. Position 614 is a phosphoserine (S614). A compositionally biased stretch (acidic residues) spans 632 to 648; it reads PGDEPSESPYESADETQ. PHD-type zinc fingers lie at residues 667–713, 714–770, and 831–875; these read EYVC…CASG, IHSC…CHAS, and VSWC…CRAG. Positions 880–942 constitute a PWWP 2 domain; it reads FQDIIWVKLG…QARVFPYMEG (63 aa). The AWS domain maps to 1011–1061; that stretch reads SEIPKCNCKPTDENPCGFDSECLNRMLMFECHPQVCPAGEFCQNQCFTKRQ. The Zn(2+) site is built by C1016, C1018, C1026, C1032, C1041, C1046, and C1052. In terms of domain architecture, SET spans 1063–1180; that stretch reads PETKIIKTDG…AGTELTFNYN (118 aa). S-adenosyl-L-methionine is bound by residues W1075, 1115–1118, and 1141–1142; these read THFY and NH. C1144 provides a ligand contact to Zn(2+). N1186 is an S-adenosyl-L-methionine binding site. Positions 1187–1203 constitute a Post-SET domain; it reads EKTVCRCGASNCSGFLG. C1191 lines the Zn(2+) pocket. R1192 contacts S-adenosyl-L-methionine. Positions 1193 and 1198 each coordinate Zn(2+). The tract at residues 1207–1232 is disordered; it reads KTSTTLSSEEKGKKTKKKTRRRRAKG. A compositionally biased stretch (basic residues) spans 1219–1230; the sequence is KKTKKKTRRRRA. The segment at 1239 to 1286 adopts a PHD-type 4; atypical zinc-finger fold; it reads EDECFRCGDGGQLVLCDRKFCTKAYHLSCLGLGKRPFGKWECPWHHCD. Residues 1333-1365 are disordered; that stretch reads VRSTKTEKPPPEPGKPKGKRRRRRGWRRVTEGK. Residues 1348 to 1359 are compositionally biased toward basic residues; sequence PKGKRRRRRGWR.

Belongs to the class V-like SAM-binding methyltransferase superfamily. Histone-lysine methyltransferase family. SET2 subfamily. In terms of assembly, interacts with HDAC1. Interacts (via PHD-type zinc fingers 1, 2 and 3) with SALL1. Interacts (via PHD-type 1, 2 and 3) with SALL4. Interacts with NANOG. Interacts with OGT. Interacts (via HMG box) with NKX2-5. In terms of tissue distribution, widely expressed. Predominantly expressed in thymus and testis.

The protein resides in the nucleus. It is found in the chromosome. It localises to the cytoplasm. Its subcellular location is the nucleolus. It catalyses the reaction L-lysyl(36)-[histone H3] + S-adenosyl-L-methionine = N(6)-methyl-L-lysyl(36)-[histone H3] + S-adenosyl-L-homocysteine + H(+). The enzyme catalyses L-lysyl(36)-[histone H3] + 2 S-adenosyl-L-methionine = N(6),N(6)-dimethyl-L-lysyl(36)-[histone H3] + 2 S-adenosyl-L-homocysteine + 2 H(+). Functionally, histone methyltransferase which specifically dimethylates nucleosomal histone H3 at 'Lys-36' (H3K36me2). Also monomethylates nucleosomal histone H3 at 'Lys-36' (H3K36me) in vitro. Does not trimethylate nucleosomal histone H3 at 'Lys-36' (H3K36me3). However, specifically trimethylates histone H3 at 'Lys-36' (H3K36me3) at euchromatic regions in embryonic stem (ES) cells. By methylating histone H3 at 'Lys-36', involved in the regulation of gene transcription during various biological processes. In ES cells, associates with developmental transcription factors such as SALL1 and represses inappropriate gene transcription mediated by histone deacetylation. During heart development, associates with transcription factor NKX2-5 to repress transcription of NKX2-5 target genes. Plays an essential role in adipogenesis, by regulating expression of genes involved in pre-adipocyte differentiation. During T-cell receptor (TCR) and CD28-mediated T-cell activation, promotes the transcription of transcription factor BCL6 which is required for follicular helper T (Tfh) cell differentiation. During B-cell development, required for the generation of the B1 lineage. During B2 cell activation, may contribute to the control of isotype class switch recombination (CRS), splenic germinal center formation, and the humoral immune response. Plays a role in class switch recombination of the immunoglobulin heavy chain (IgH) locus during B-cell activation. By regulating the methylation of histone H3 at 'Lys-36' and histone H4 at 'Lys-20' at the IgH locus, involved in TP53BP1 recruitment to the IgH switch region and promotes the transcription of IgA. Its function is as follows. Histone methyltransferase which specifically dimethylates nucleosomal histone H3 at 'Lys-36' (H3K36me2). Histone methyltransferase which specifically dimethylates nucleosomal histone H3 at 'Lys-36' (H3K36me2). Methylation of histone H3 at 'Lys-27' is controversial. Mono-, di- or tri-methylates histone H3 at 'Lys-27' (H3K27me, H3K27me2 and H3K27me3). Does not methylate histone H3 at 'Lys-27'. May act as a transcription regulator that binds DNA and suppresses IL5 transcription through HDAC recruitment. The protein is Histone-lysine N-methyltransferase NSD2 of Homo sapiens (Human).